The following is an 80-amino-acid chain: uncharacterized protein (80 aa).

A helical transmembrane segment spans residues 12–32 (FKIIALILLIVLIINLSYKLF).

Its subcellular location is the membrane. This is an uncharacterized protein from Saccharomyces cerevisiae (strain ATCC 204508 / S288c) (Baker's yeast).